Reading from the N-terminus, the 296-residue chain is NAD kinase (296 aa).

The active-site Proton acceptor is Asp72. Residues 72-73 (DG), 146-147 (ND), Arg157, Lys174, Asp176, 187-192 (TAYALS), and Gln247 each bind NAD(+).

Belongs to the NAD kinase family. Requires a divalent metal cation as cofactor.

It is found in the cytoplasm. It catalyses the reaction NAD(+) + ATP = ADP + NADP(+) + H(+). Its function is as follows. Involved in the regulation of the intracellular balance of NAD and NADP, and is a key enzyme in the biosynthesis of NADP. Catalyzes specifically the phosphorylation on 2'-hydroxyl of the adenosine moiety of NAD to yield NADP. This is NAD kinase from Pseudomonas putida (strain W619).